The primary structure comprises 429 residues: Adenylosuccinate synthetase (429 aa).

GTP contacts are provided by residues 12-18 (GDEGKGK) and 40-42 (GHT). Asp-13 functions as the Proton acceptor in the catalytic mechanism. Mg(2+)-binding residues include Asp-13 and Gly-40. IMP-binding positions include 13–16 (DEGK), 38–41 (NAGH), Thr-129, Arg-143, Gln-223, Thr-238, and Arg-302. His-41 acts as the Proton donor in catalysis. Residue 298 to 304 (VVTGRKR) participates in substrate binding. GTP contacts are provided by residues Arg-304, 330–332 (KLD), and 412–414 (STS).

This sequence belongs to the adenylosuccinate synthetase family. Homodimer. Mg(2+) serves as cofactor.

The protein resides in the cytoplasm. It catalyses the reaction IMP + L-aspartate + GTP = N(6)-(1,2-dicarboxyethyl)-AMP + GDP + phosphate + 2 H(+). It participates in purine metabolism; AMP biosynthesis via de novo pathway; AMP from IMP: step 1/2. Functionally, plays an important role in the de novo pathway of purine nucleotide biosynthesis. Catalyzes the first committed step in the biosynthesis of AMP from IMP. The sequence is that of Adenylosuccinate synthetase from Bartonella tribocorum (strain CIP 105476 / IBS 506).